Consider the following 81-residue polypeptide: Keratin-associated protein 19-3 (81 aa).

This sequence belongs to the KRTAP type 19 family. Interacts with hair keratins.

In the hair cortex, hair keratin intermediate filaments are embedded in an interfilamentous matrix, consisting of hair keratin-associated proteins (KRTAP), which are essential for the formation of a rigid and resistant hair shaft through their extensive disulfide bond cross-linking with abundant cysteine residues of hair keratins. The matrix proteins include the high-sulfur and high-glycine-tyrosine keratins. The sequence is that of Keratin-associated protein 19-3 (KRTAP19-3) from Homo sapiens (Human).